Consider the following 427-residue polypeptide: Stabilizer of axonemal microtubules 4 (427 aa).

Disordered regions lie at residues 82–105 (TSKS…PLPW), 273–298 (RTLN…QPPQ), and 314–335 (GNKE…SYEQ). Composition is skewed to polar residues over residues 287 to 298 (ASMSHRSYQPPQ) and 321 to 332 (FTLNNPSYVRSS).

Microtubule inner protein component of sperm flagellar doublet microtubules. Interacts with PPP1CA.

It is found in the cell projection. The protein localises to the cilium. It localises to the cytoplasm. The protein resides in the cytoskeleton. Its subcellular location is the flagellum axoneme. This Mus musculus (Mouse) protein is Stabilizer of axonemal microtubules 4.